The sequence spans 172 residues: MDLKQYVSEVQDWPKPGVSFKDITTIMDNGEAYGYATNKIVEYAKDRDVDIVVGPEARGFIIGCPVAYSMGIGFAPVRKEGKLPREVIRYEYDLEYGTNVLTMHKDAIKPGQRVLITDDLLATGGTIEAAIKLVEKLGGIVVGIAFIIELKYLNGIEKIKDYDVMSLISYDE.

This sequence belongs to the purine/pyrimidine phosphoribosyltransferase family. In terms of assembly, homodimer.

The protein localises to the cytoplasm. The catalysed reaction is AMP + diphosphate = 5-phospho-alpha-D-ribose 1-diphosphate + adenine. Its pathway is purine metabolism; AMP biosynthesis via salvage pathway; AMP from adenine: step 1/1. Its function is as follows. Catalyzes a salvage reaction resulting in the formation of AMP, that is energically less costly than de novo synthesis. This chain is Adenine phosphoribosyltransferase, found in Staphylococcus aureus (strain bovine RF122 / ET3-1).